A 177-amino-acid chain; its full sequence is Large ribosomal subunit protein uL10 (177 aa).

It belongs to the universal ribosomal protein uL10 family. In terms of assembly, part of the ribosomal stalk of the 50S ribosomal subunit. The N-terminus interacts with L11 and the large rRNA to form the base of the stalk. The C-terminus forms an elongated spine to which L12 dimers bind in a sequential fashion forming a multimeric L10(L12)X complex.

Forms part of the ribosomal stalk, playing a central role in the interaction of the ribosome with GTP-bound translation factors. In Thermoanaerobacter pseudethanolicus (strain ATCC 33223 / 39E) (Clostridium thermohydrosulfuricum), this protein is Large ribosomal subunit protein uL10.